Reading from the N-terminus, the 65-residue chain is uncharacterized protein (65 aa).

This is an uncharacterized protein from Escherichia coli (Bacteriophage T4).